The primary structure comprises 100 residues: Small ribosomal subunit protein uS14c (100 aa).

This sequence belongs to the universal ribosomal protein uS14 family. In terms of assembly, part of the 30S ribosomal subunit.

It is found in the plastid. It localises to the chloroplast. In terms of biological role, binds 16S rRNA, required for the assembly of 30S particles. The sequence is that of Small ribosomal subunit protein uS14c from Pisum sativum (Garden pea).